Here is a 151-residue protein sequence, read N- to C-terminus: Deoxyuridine 5'-triphosphate nucleotidohydrolase (151 aa).

Residues 70 to 72 (RSG), Asn-83, 87 to 89 (LID), and Met-97 contribute to the substrate site.

This sequence belongs to the dUTPase family. Requires Mg(2+) as cofactor.

It catalyses the reaction dUTP + H2O = dUMP + diphosphate + H(+). The protein operates within pyrimidine metabolism; dUMP biosynthesis; dUMP from dCTP (dUTP route): step 2/2. Functionally, this enzyme is involved in nucleotide metabolism: it produces dUMP, the immediate precursor of thymidine nucleotides and it decreases the intracellular concentration of dUTP so that uracil cannot be incorporated into DNA. The sequence is that of Deoxyuridine 5'-triphosphate nucleotidohydrolase from Pseudomonas syringae pv. syringae (strain B728a).